The chain runs to 192 residues: Probable GTP-binding protein EngB (192 aa).

The 171-residue stretch at 22–192 (QLPEIVFVGR…LLEQLAIYTG (171 aa)) folds into the EngB-type G domain. GTP contacts are provided by residues 30 to 37 (GRSNVGKS), 57 to 61 (GKTQL), 75 to 78 (DLPG), 142 to 145 (TKYD), and 172 to 174 (YSA). Residues S37 and T59 each coordinate Mg(2+).

It belongs to the TRAFAC class TrmE-Era-EngA-EngB-Septin-like GTPase superfamily. EngB GTPase family. Mg(2+) is required as a cofactor.

Necessary for normal cell division and for the maintenance of normal septation. This Chlorobium phaeobacteroides (strain BS1) protein is Probable GTP-binding protein EngB.